Reading from the N-terminus, the 510-residue chain is 2,3-bisphosphoglycerate-independent phosphoglycerate mutase (510 aa).

D12 serves as a coordination point for Mn(2+). A Phosphotyrosine modification is found at Y36. S62 contacts Mn(2+). S62 functions as the Phosphoserine intermediate in the catalytic mechanism. Substrate contacts are provided by residues H123, 153–154 (RD), R185, R191, 261–264 (RPDR), and K336. Residues D403, H407, D444, H445, and H462 each contribute to the Mn(2+) site.

It belongs to the BPG-independent phosphoglycerate mutase family. As to quaternary structure, monomer. Mn(2+) serves as cofactor.

The catalysed reaction is (2R)-2-phosphoglycerate = (2R)-3-phosphoglycerate. The protein operates within carbohydrate degradation; glycolysis; pyruvate from D-glyceraldehyde 3-phosphate: step 3/5. Essential for rapid growth and for sporulation. Catalyzes the interconversion of 2-phosphoglycerate and 3-phosphoglycerate. This Halalkalibacterium halodurans (strain ATCC BAA-125 / DSM 18197 / FERM 7344 / JCM 9153 / C-125) (Bacillus halodurans) protein is 2,3-bisphosphoglycerate-independent phosphoglycerate mutase.